A 988-amino-acid chain; its full sequence is Voltage-gated delayed rectifier potassium channel KCNH5 (988 aa).

Residues 1-217 (MPGGKRGLVA…LHYCAFKTTW (217 aa)) lie on the Cytoplasmic side of the membrane. A PAS domain is found at 14–86 (TFLENIVRRS…TIEKVRQTFD (73 aa)). The PAC domain occupies 91–143 (NCFEVLLYKKNRTPVWFYMQIAPIRNEHEKVVLFLCTFKDITLFKQPIEDDST). A helical transmembrane segment spans residues 218-238 (DWVILILTFYTAIMVPYNVSF). Residues 239-243 (KTKQN) are Extracellular-facing. A helical transmembrane segment spans residues 244–264 (NIAWLVLDSVVDVIFLVDIVL). Residues 265 to 291 (NFHTTFVGPGGEVISDPKLIRMNYLKT) lie on the Cytoplasmic side of the membrane. Residues 292-312 (WFVIDLLSCLPYDIINAFENV) form a helical membrane-spanning segment. Over 313 to 319 (DEGISSL) the chain is Extracellular. The chain crosses the membrane as a helical; Voltage-sensor span at residues 320-340 (FSSLKVVRLLRLGRVARKLDH). Over 341-346 (YLEYGA) the chain is Cytoplasmic. Residues 347–367 (AVLVLLVCVFGLVAHWLACIW) traverse the membrane as a helical segment. At 368–419 (YSIGDYEVIDEVTNTIQIDSWLYQLALSIGTPYRYNTSAGIWEGGPSKDSLY) the chain is on the extracellular side. Residue N403 is glycosylated (N-linked (GlcNAc...) asparagine). The pore-forming intramembrane region spans 420-440 (VSSLYFTMTSLTTIGFGNIAP). The short motif at 432 to 437 (TIGFGN) is the Selectivity filter element. The Extracellular portion of the chain corresponds to 441–446 (TTDVEK). A helical membrane pass occupies residues 447-467 (MFSVAMMMVGSLLYATIFGNV). Topologically, residues 468-988 (TTIFQQMYAN…PESDKDEINF (521 aa)) are cytoplasmic. A nucleoside 3',5'-cyclic phosphate is bound at residue 550–667 (AFRLASDGCL…NSFSRNLTLT (118 aa)). The interval 704-715 (HPVRKLFQKFKQ) is calmodulin-binding. Positions 718–742 (ELRNQGSAQSDPERSQLQVESRPLQ) are disordered. Residues 721-742 (NQGSAQSDPERSQLQVESRPLQ) show a composition bias toward polar residues. K785 is covalently cross-linked (Glycyl lysine isopeptide (Lys-Gly) (interchain with G-Cter in ubiquitin)). Disordered regions lie at residues 839-897 (LLSE…AKHP) and 946-965 (SVPQ…PPQI). The segment covering 871-885 (SDLRLDKAGEARSPL) has biased composition (basic and acidic residues). A Phosphoserine modification is found at S883. Residues 909-948 (TLQEVKHELKEDIQLLSCRMTALEKQVAEILKLLSEKSVP) form a CAD (involved in subunit assembly) region.

The protein belongs to the potassium channel family. H (Eag) (TC 1.A.1.20) subfamily. Kv10.2/KCNH5 sub-subfamily. In terms of assembly, homotetramer. The potassium channel is probably composed of a homo- or heterotetrameric complex of pore-forming alpha subunits that can associate with modulating beta subunits. Heteromultimer with KCNH1/EAG. Detected in adult testis and in embryonic and adult brain, but not in other tissues. Highly expressed in specific brain areas, such as neocortex, olfactory bulb, primary olfactory cortex and brain stem. In cortex, expression is concentrated in a narrow band toward the middle lamella (layer IV). Moderately expressed in spinal cord, dorsal thalamic nuclei, medial hypothalamus, colliculus, lateral lemniscus, pontine nuclei and Islands of Calleja.

It localises to the membrane. It carries out the reaction K(+)(in) = K(+)(out). Its activity is regulated as follows. Inhibited by low nanomolar concentrations of cytosolic calcium. Pore-forming (alpha) subunit of a voltage-gated delayed rectifier potassium channel that mediates outward-rectifying potassium currents which, on depolarization, reaches a steady-state level and do not inactivate. The kinetic is characterized by a slow activation time course and a small voltage dependence of the activation time constants, therefore, starts to open at more negative voltages. The activation kinetics depend on the prepulse potential and external divalent cation concentration. The time course of activation is biphasic with a fast and a slowly activating current component. With negative prepulses, the current activation is delayed and slowed down several fold, whereas more positive prepulses speed up activation, therefore the activation rate depends on holding potential. In Rattus norvegicus (Rat), this protein is Voltage-gated delayed rectifier potassium channel KCNH5.